The following is a 233-amino-acid chain: Antiholin-like protein LrgB (233 aa).

7 helical membrane-spanning segments follow: residues 7–27, 33–53, 63–83, 97–117, 124–144, 152–172, and 212–232; these read INTPYFGILLSLIPFIIATFL, GFFLFTPLFVSMVVGIAFLKL, IGGDIINFFLEPATICFAIPL, ILGGITLGTTAALVCIYLIAE, GIIASMLPQGATTAIALPVSA, LTSLAVILNGVIIYALGSKLI, and ISLVIVGVIVVIVAPILATLL.

Belongs to the CidB/LrgB family. LrgB subfamily.

The protein localises to the cell membrane. In terms of biological role, inhibits the expression or activity of extracellular murein hydrolases by interacting, possibly with LrgA, with the holin-like proteins CidA and/or CidB. The LrgAB and CidAB proteins may affect the proton motive force of the membrane. May be involved in programmed cell death (PCD), possibly triggering PCD in response to antibiotics and environmental stresses. This is Antiholin-like protein LrgB from Staphylococcus saprophyticus subsp. saprophyticus (strain ATCC 15305 / DSM 20229 / NCIMB 8711 / NCTC 7292 / S-41).